Consider the following 154-residue polypeptide: Ribonuclease H (154 aa).

The RNase H type-1 domain occupies 5–147 (GKSRVAIYTD…ADMLARGEVE (143 aa)). Mg(2+)-binding residues include Asp14, Glu53, Asp75, and Asp139.

Belongs to the RNase H family. As to quaternary structure, monomer. Mg(2+) is required as a cofactor.

The protein localises to the cytoplasm. The enzyme catalyses Endonucleolytic cleavage to 5'-phosphomonoester.. In terms of biological role, endonuclease that specifically degrades the RNA of RNA-DNA hybrids. This Anaplasma marginale (strain St. Maries) protein is Ribonuclease H.